Consider the following 375-residue polypeptide: Odorant receptor 10 (375 aa).

6 helical membrane passes run 32–52 (ISII…GHSW), 58–78 (VIIK…TLIL), 125–145 (NLAL…FTGV), 167–187 (IIYL…IPFT), 250–270 (YICF…LFLL), and 279–299 (IVIV…FYWH).

This sequence belongs to the insect chemoreceptor superfamily. Heteromeric odorant receptor channel (TC 1.A.69) family. Expressed in female antenna, maxillary palp and proboscis. Expressed in female body. Expressed in male tissues.

The protein localises to the cell membrane. In terms of biological role, odorant receptor which complexes with Orco, a coreceptor, to form odorant-sensing units, providing sensitive and prolonged odorant signaling and calcium permeability. Can sense indole, 1-octen-3-ol, 3-methyindole and an insect repellent DEET. The protein is Odorant receptor 10 of Aedes albopictus (Asian tiger mosquito).